The chain runs to 2731 residues: Putative mediator of RNA polymerase II transcription subunit 12 (2731 aa).

4 coiled-coil regions span residues Gln5 to Gln37, His75 to His108, Gln141 to Gln189, and Ile275 to Gln304. Disordered regions lie at residues Gln29–His57 and Gln101–Gln145. Over residues Gln310 to Pro320 the composition is skewed to low complexity. 4 disordered regions span residues Gln310–Ser376, Thr432–Pro451, Leu685–Gln708, and Arg1251–Ser1341. The segment covering Gln327–Ile337 has biased composition (polar residues). The segment covering Lys347 to Gly361 has biased composition (basic and acidic residues). Basic residues predominate over residues Gly688 to Ser701. Over residues Arg1251–Asn1268 the composition is skewed to low complexity. 2 stretches are compositionally biased toward acidic residues: residues Asn1275–Glu1298 and Asn1305–Met1326. Coiled-coil stretches lie at residues Glu1316–Asn1344 and Lys1375–Leu1433. Disordered stretches follow at residues His1778 to Gly1825, Thr1892 to Thr1958, Ser2212 to Lys2258, Thr2307 to Gln2351, Glu2472 to Thr2532, and His2705 to Lys2731. Composition is skewed to low complexity over residues Glu1783–Asn1824, Thr1892–Thr1909, Asn1916–Thr1958, Ser2212–Gln2250, Thr2307–Ser2322, Gln2337–Gln2351, Glu2472–Leu2501, Leu2508–Thr2532, and His2705–Gln2720. The stretch at Thr2239 to Ser2270 forms a coiled coil. Residues Leu2336–Gln2363 adopt a coiled-coil conformation. Residues Gln2523 to Leu2662 are a coiled coil. Residues Lys2721–Lys2731 show a composition bias toward polar residues.

The protein belongs to the Mediator complex subunit 12 family. As to quaternary structure, component of the Mediator complex.

The protein resides in the nucleus. Functionally, component of the Mediator complex, a coactivator involved in the regulated transcription of nearly all RNA polymerase II-dependent genes. Mediator functions as a bridge to convey information from gene-specific regulatory proteins to the basal RNA polymerase II transcription machinery. Mediator is recruited to promoters by direct interactions with regulatory proteins and serves as a scaffold for the assembly of a functional preinitiation complex with RNA polymerase II and the general transcription factors. This Dictyostelium discoideum (Social amoeba) protein is Putative mediator of RNA polymerase II transcription subunit 12 (med12).